The following is a 103-amino-acid chain: ATP-dependent Clp protease adapter protein ClpS (103 aa).

The protein belongs to the ClpS family. As to quaternary structure, binds to the N-terminal domain of the chaperone ClpA.

In terms of biological role, involved in the modulation of the specificity of the ClpAP-mediated ATP-dependent protein degradation. The sequence is that of ATP-dependent Clp protease adapter protein ClpS from Nitrosomonas eutropha (strain DSM 101675 / C91 / Nm57).